The sequence spans 143 residues: Protein SLC31A2 (143 aa).

The Extracellular segment spans residues Met-1–Ser-22. A helical membrane pass occupies residues Pro-23–Ile-43. At Lys-44–Tyr-93 the chain is on the cytoplasmic side. The residue at position 75 (Thr-75) is a Phosphothreonine. The residue at position 77 (Ser-77) is a Phosphoserine. A helical transmembrane segment spans residues Phe-94–Val-114. Topologically, residues Met-115–Thr-119 are extracellular. The helical transmembrane segment at Trp-120–Leu-140 threads the bilayer. Over Asn-141–Thr-143 the chain is Cytoplasmic.

Belongs to the copper transporter (Ctr) (TC 1.A.56) family. SLC31A subfamily. Oligomer. Interacts with SLC31A1; this interaction stabilizes SLC31A2 and protects it from ubiquitination and the subsequent degradation. Ubiquitinated; ubiquitination and the subsequent proteasomal degradation are prevent by SLC31A1 that stabilizes it.

Its subcellular location is the membrane. The protein localises to the cytoplasmic vesicle membrane. It is found in the late endosome membrane. The protein resides in the lysosome membrane. It localises to the recycling endosome membrane. Does not function as a copper(1+) importer in vivo. However, in vitro functions as a low-affinity copper(1+) importer. Regulator of SLC31A1 which facilitates the cleavage of the SLC31A1 ecto-domain or which stabilizes the truncated form of SLC31A1 (Truncated CTR1 form), thereby drives the SLC31A1 truncated form-dependent endosomal copper export and modulates the copper and cisplatin accumulation via SLC31A1. The protein is Protein SLC31A2 of Mus musculus (Mouse).